The primary structure comprises 260 residues: Nuclear receptor subfamily 0 group B member 2 (260 aa).

One can recognise an NR LBD domain in the interval 16-260; it reads SHPTILYTLL…ELLEDMLLLR (245 aa). At Arg57 the chain carries Symmetric dimethylarginine; by PRMT5.

It belongs to the nuclear hormone receptor family. NR0 subfamily. In terms of assembly, heterodimer; efficient DNA binding requires dimerization with another bHLH protein. Interacts (via N-terminus) with NEUROD1 (via N-terminus and C-terminus). Interacts with ID2. Interacts with NR1I3 and EID1. Interacts with RARA, RXRA, THRB, NR5A1, NR5A2, PPARA and PPARG. Interacts with RORG, NFIL3, NR1D1 and BHLHE41. Interacts with HNF4A; the resulting heterodimer is transcriptionally inactive. Interacts with DDX3X; this interaction disrupts the interaction between HNF4 and NR0B2/SHP that forms inactive heterodimers and enhances the formation of active HNF4 homodimers. In terms of processing, arginine methylation by PRMT5 enhances repression activity of metabolic genes in liver in response to bile acid signaling, by increasing interaction with cofactors. Detected in kidney, testis, heart and liver.

Its subcellular location is the cytoplasm. It localises to the nucleus. Transcriptional regulator that acts as a negative regulator of receptor-dependent signaling pathways. Specifically inhibits transactivation of the nuclear receptor with which it interacts. Inhibits transcriptional activity of NEUROD1 on E-box-containing promoter by interfering with the coactivation function of the p300/CBP-mediated transcription complex for NEUROD1. Essential component of the liver circadian clock which via its interaction with NR1D1 and RORG regulates NPAS2-mediated hepatic lipid metabolism. Regulates the circadian expression of cytochrome P450 (CYP) enzymes. Represses: NR5A2 and HNF4A to down-regulate CYP2C38, NFLI3 to up-regulate CYP2A5, BHLHE41/HNF1A axis to up-regulate CYP1A2, CYP2E1 and CYP3A11, and NR1D1 to up-regulate CYP2B10, CYP4A10 and CYP4A14. The chain is Nuclear receptor subfamily 0 group B member 2 (Nr0b2) from Rattus norvegicus (Rat).